Reading from the N-terminus, the 720-residue chain is Nucleoporin 88 (720 aa).

Positions leucine 584–arginine 611 form a coiled coil.

As to expression, widely expressed. Higher levels of expression are detected in highly proliferative frontal regions of the embryo, e.g. brain, eye and anterior trunk.

It localises to the nucleus. The protein resides in the nuclear pore complex. Functionally, component of the nuclear pore complex. The chain is Nucleoporin 88 from Danio rerio (Zebrafish).